A 381-amino-acid polypeptide reads, in one-letter code: MSKRDFYEVLGVGRDASERDIKKAYKRLAMKYHPDRNSGDAGAAEKFKEVKEAYEILTDAQKKAAYDQYGHAAFEQGAGGFGGGGFGGGGADFGDIFGDVFGDIFGGGRRGGGPRAQRGSDLRYNMELSLEEAVRGCSKEIEVPTLVHCDACDGSGAKKGTSAQTCGTCHGHGQVQMRQGFFAVQQTCPTCHGKGKIIKDPCNVCHGQGRKQKTKTLNVKIPAGVDTGDRIRLSGEGEAGEMGAPAGDLYVQVHVKEHHIFERDGNNLYCEVPVSFAMAALGGEVEVPTLDGRVSLKVPAETQTGRMFRMRGKGVKGVRSAALGDLIVKLVVETPVNLSARQKELLKEFEESCGGEAATKHKPKAEGFFNGVKKFFDDLTS.

The J domain occupies 5-70; sequence DFYEVLGVGR…QKKAAYDQYG (66 aa). The CR-type zinc-finger motif lies at 136 to 214; the sequence is GCSKEIEVPT…CHGQGRKQKT (79 aa). Zn(2+) contacts are provided by cysteine 149, cysteine 152, cysteine 166, cysteine 169, cysteine 188, cysteine 191, cysteine 202, and cysteine 205. CXXCXGXG motif repeat units follow at residues 149–156, 166–173, 188–195, and 202–209; these read CDACDGSG, CGTCHGHG, CPTCHGKG, and CNVCHGQG.

The protein belongs to the DnaJ family. As to quaternary structure, homodimer. Requires Zn(2+) as cofactor.

It localises to the cytoplasm. In terms of biological role, participates actively in the response to hyperosmotic and heat shock by preventing the aggregation of stress-denatured proteins and by disaggregating proteins, also in an autonomous, DnaK-independent fashion. Unfolded proteins bind initially to DnaJ; upon interaction with the DnaJ-bound protein, DnaK hydrolyzes its bound ATP, resulting in the formation of a stable complex. GrpE releases ADP from DnaK; ATP binding to DnaK triggers the release of the substrate protein, thus completing the reaction cycle. Several rounds of ATP-dependent interactions between DnaJ, DnaK and GrpE are required for fully efficient folding. Also involved, together with DnaK and GrpE, in the DNA replication of plasmids through activation of initiation proteins. The sequence is that of Chaperone protein DnaJ from Vibrio cholerae serotype O1 (strain ATCC 39541 / Classical Ogawa 395 / O395).